A 662-amino-acid chain; its full sequence is High affinity sulfate transporter 2 (662 aa).

Residues 1-35 (MSQRVSDQAMAEVIAETRTNSSSRRHGGGDDTPSL) are disordered. Helical transmembrane passes span 103–123 (GDFIAGLTIASLCIPQDLAYA), 128–148 (LDPWYGLYSSFVAPLVYAFMG), 153–173 (IAIGPVAVVSLLLGTLLSNEI), 182–202 (LRLAFTATFFAGVTQMLLGVC), 205–225 (GFLIDFLSHAAIVGFMAGAAI), 264–284 (WETILIGLSFLIFLLITKYIA), 291–311 (FWVSAISPMICVIVSTFFVYI), 346–366 (AGVRVGVVAGLVALTEAMAIG), 383–403 (MVAMGTMNIVGSLTSCYVTTG), 420–440 (VSNIVMAIVVLLTLLVITPLF), 447–467 (VLASIIIAAVVNLVNIEAMVL), and 481–501 (GAFFGVIFKSVEIGLLIAVAI). In terms of domain architecture, STAS spans 532 to 655 (QYPKAEQIPG…LTVADAVATY (124 aa)).

This sequence belongs to the SLC26A/SulP transporter (TC 2.A.53) family.

Its subcellular location is the membrane. In terms of biological role, high-affinity H(+)/sulfate cotransporter that mediates the uptake of sulfate by plant roots from low concentrations of sulfate in the soil solution. This Stylosanthes hamata (Caribbean stylo) protein is High affinity sulfate transporter 2 (ST2).